A 539-amino-acid chain; its full sequence is Chaperonin GroEL (539 aa).

ATP is bound by residues Thr29–Pro32, Asp86–Thr90, Gly413, Asn476–Ala478, and Asp492.

Belongs to the chaperonin (HSP60) family. As to quaternary structure, forms a cylinder of 14 subunits composed of two heptameric rings stacked back-to-back. Interacts with the co-chaperonin GroES.

Its subcellular location is the cytoplasm. The catalysed reaction is ATP + H2O + a folded polypeptide = ADP + phosphate + an unfolded polypeptide.. Its function is as follows. Together with its co-chaperonin GroES, plays an essential role in assisting protein folding. The GroEL-GroES system forms a nano-cage that allows encapsulation of the non-native substrate proteins and provides a physical environment optimized to promote and accelerate protein folding. The protein is Chaperonin GroEL of Geobacillus sp. (strain WCH70).